A 458-amino-acid polypeptide reads, in one-letter code: MASPALAAALAAAAAEGPNGSDAGEWGSGGGANASGTDWGPPPGQYSAGAVAGLAAVVGFLIVFTVVGNVLVVIAVLTSRALRAPQNLFLVSLASADILVATLVMPFSLANELMAYWYFGQVWCGVYLALDVLFCTSSIVHLCAISLDRYWSVTQAVEYNLKRTPRRVKATIVAVWLISAVISFPPLVSFYRRPDGAAYPQCGLNDETWYILSSCIGSFFAPCLIMGLVYARIYRVAKLRTRTLSEKRGPAGPDGASPTTENGLGKAAGENGHCAPPRTEVEPDESSAAERRRRRGALRRGGRRREGAEGDTGSADGPGPGLAAEQGARTASRSPGPGGRLSRASSRSVEFFLSRRRRARSSVCRRKVAQAREKRFTFVLAVVMGVFVLCWFPFFFSYSLYGICREACQLPEPLFKFFFWIGYCNSSLNPVIYTVFNQDFRRSFKHILFRRRRRGFRQ.

The Extracellular portion of the chain corresponds to 1–51; sequence MASPALAAALAAAAAEGPNGSDAGEWGSGGGANASGTDWGPPPGQYSAGAV. Residues asparagine 19 and asparagine 33 are each glycosylated (N-linked (GlcNAc...) asparagine). A helical transmembrane segment spans residues 52–76; sequence AGLAAVVGFLIVFTVVGNVLVVIAV. Residues 77–88 lie on the Cytoplasmic side of the membrane; the sequence is LTSRALRAPQNL. The chain crosses the membrane as a helical span at residues 89–114; it reads FLVSLASADILVATLVMPFSLANELM. Residues 115-124 are Extracellular-facing; the sequence is AYWYFGQVWC. An intrachain disulfide couples cysteine 124 to cysteine 202. A helical transmembrane segment spans residues 125–147; it reads GVYLALDVLFCTSSIVHLCAISL. Over 148 to 168 the chain is Cytoplasmic; that stretch reads DRYWSVTQAVEYNLKRTPRRV. A helical transmembrane segment spans residues 169-191; sequence KATIVAVWLISAVISFPPLVSFY. The Extracellular segment spans residues 192-207; it reads RRPDGAAYPQCGLNDE. The helical transmembrane segment at 208-231 threads the bilayer; it reads TWYILSSCIGSFFAPCLIMGLVYA. Residues 232–379 lie on the Cytoplasmic side of the membrane; it reads RIYRVAKLRT…QAREKRFTFV (148 aa). Residues 245–343 are disordered; the sequence is SEKRGPAGPD…SPGPGGRLSR (99 aa). Positions 291 to 303 are enriched in basic residues; the sequence is RRRRRGALRRGGR. A helical membrane pass occupies residues 380–403; that stretch reads LAVVMGVFVLCWFPFFFSYSLYGI. The Extracellular segment spans residues 404 to 416; sequence CREACQLPEPLFK. The chain crosses the membrane as a helical span at residues 417-437; sequence FFFWIGYCNSSLNPVIYTVFN. At 438–458 the chain is on the cytoplasmic side; that stretch reads QDFRRSFKHILFRRRRRGFRQ.

Belongs to the G-protein coupled receptor 1 family. Adrenergic receptor subfamily. ADRA2C sub-subfamily.

The protein resides in the cell membrane. Alpha-2 adrenergic receptors mediate the catecholamine-induced inhibition of adenylate cyclase through the action of G proteins. The sequence is that of Alpha-2C adrenergic receptor (Adra2c) from Rattus norvegicus (Rat).